We begin with the raw amino-acid sequence, 483 residues long: UDP-N-acetylmuramate--L-alanine ligase (483 aa).

128–134 (GTHGKTT) serves as a coordination point for ATP.

This sequence belongs to the MurCDEF family.

It is found in the cytoplasm. It carries out the reaction UDP-N-acetyl-alpha-D-muramate + L-alanine + ATP = UDP-N-acetyl-alpha-D-muramoyl-L-alanine + ADP + phosphate + H(+). Its pathway is cell wall biogenesis; peptidoglycan biosynthesis. Functionally, cell wall formation. The chain is UDP-N-acetylmuramate--L-alanine ligase from Shewanella violacea (strain JCM 10179 / CIP 106290 / LMG 19151 / DSS12).